The sequence spans 224 residues: UPF0758 protein RSc2444 (224 aa).

Positions 102–224 (TLESPQSVKD…VYSFLEHGKM (123 aa)) constitute an MPN domain. Zn(2+) contacts are provided by His-173, His-175, and Asp-186. The JAMM motif signature appears at 173–186 (HNHPTGHVEPSESD).

Belongs to the UPF0758 family.

This is UPF0758 protein RSc2444 from Ralstonia nicotianae (strain ATCC BAA-1114 / GMI1000) (Ralstonia solanacearum).